Consider the following 373-residue polypeptide: Outer membrane protein assembly factor BamC (373 aa).

A signal peptide spans 1–16 (MLKQVTPLVLIAAVTA). Residue Cys-17 is the site of N-palmitoyl cysteine attachment. A lipid anchor (S-diacylglycerol cysteine) is attached at Cys-17.

This sequence belongs to the BamC family. In terms of assembly, part of the Bam complex.

It localises to the cell outer membrane. Its function is as follows. Part of the outer membrane protein assembly complex, which is involved in assembly and insertion of beta-barrel proteins into the outer membrane. This Shewanella sediminis (strain HAW-EB3) protein is Outer membrane protein assembly factor BamC.